A 318-amino-acid chain; its full sequence is Biotin synthase (318 aa).

The region spanning 44 to 273 is the Radical SAM core domain; the sequence is LCGNKFDLCT…TVQIRLAGGR (230 aa). Cysteine 62, cysteine 66, and cysteine 69 together coordinate [4Fe-4S] cluster. The [2Fe-2S] cluster site is built by serine 106, cysteine 138, cysteine 198, and arginine 268.

The protein belongs to the radical SAM superfamily. Biotin synthase family. As to quaternary structure, homodimer. [4Fe-4S] cluster serves as cofactor. Requires [2Fe-2S] cluster as cofactor.

It carries out the reaction (4R,5S)-dethiobiotin + (sulfur carrier)-SH + 2 reduced [2Fe-2S]-[ferredoxin] + 2 S-adenosyl-L-methionine = (sulfur carrier)-H + biotin + 2 5'-deoxyadenosine + 2 L-methionine + 2 oxidized [2Fe-2S]-[ferredoxin]. It participates in cofactor biosynthesis; biotin biosynthesis; biotin from 7,8-diaminononanoate: step 2/2. Catalyzes the conversion of dethiobiotin (DTB) to biotin by the insertion of a sulfur atom into dethiobiotin via a radical-based mechanism. This chain is Biotin synthase, found in Clostridium botulinum (strain Hall / ATCC 3502 / NCTC 13319 / Type A).